Here is a 240-residue protein sequence, read N- to C-terminus: Putative protein FAM10A4 (240 aa).

The interval 38 to 94 is disordered; it reads MGGTATQKAKSEENTKEEKPDSKVEEDLKADEPSSEESDLEIDKEGVIEPDTDAPQE. Basic and acidic residues predominate over residues 46 to 69; it reads AKSEENTKEEKPDSKVEEDLKADE. The span at 85-94 shows a compositional bias: acidic residues; sequence IEPDTDAPQE. TPR repeat units lie at residues 110-143, 145-177, and 179-211; these read ANDK…NPRL, ILYA…NPDS, and QPYK…DYDE. The tract at residues 220 to 240 is disordered; it reads VQPRAQKIAEHQRKYERKREE. The span at 226-240 shows a compositional bias: basic and acidic residues; sequence KIAEHQRKYERKREE.

Belongs to the FAM10 family. In terms of tissue distribution, highly expressed in bone marrow and weakly in placenta, pancreas, heart and HeLa cell line.

The protein localises to the cytoplasm. This Homo sapiens (Human) protein is Putative protein FAM10A4 (ST13P4).